We begin with the raw amino-acid sequence, 600 residues long: DNA polymerase alpha subunit B (600 aa).

The disordered stretch occupies residues 107 to 165 (ETLLSSYTTPSKGPLKRVSSTPETPLTKRSVAARSPRQLLSPSSFSPSATPSQKYTSRT). A Phosphoserine modification is found at serine 126. A phosphothreonine mark is found at threonine 127 and threonine 130. Positions 139–159 (ARSPRQLLSPSSFSPSATPSQ) are enriched in low complexity. Serine 141, serine 147, serine 152, and serine 154 each carry phosphoserine.

It belongs to the DNA polymerase alpha subunit B family. As to quaternary structure, component of the alpha DNA polymerase complex (also known as the alpha DNA polymerase-primase complex) consisting of four subunits: the catalytic subunit POLA1, the regulatory subunit POLA2, and the primase complex subunits PRIM1 and PRIM2 respectively. Within the complex, POLA1 directly interacts with PRIM2. Post-translationally, phosphorylated in a cell cycle-dependent manner, in G2/M phase.

It is found in the nucleus. In terms of biological role, accessory subunit of the DNA polymerase alpha complex (also known as the alpha DNA polymerase-primase complex) which plays an essential role in the initiation of DNA synthesis. During the S phase of the cell cycle, the DNA polymerase alpha complex (composed of a catalytic subunit POLA1, an accessory subunit POLA2 and two primase subunits, the catalytic subunit PRIM1 and the regulatory subunit PRIM2) is recruited to DNA at the replicative forks via direct interactions with MCM10 and WDHD1. The primase subunit of the polymerase alpha complex initiates DNA synthesis by oligomerising short RNA primers on both leading and lagging strands. These primers are initially extended by the polymerase alpha catalytic subunit and subsequently transferred to polymerase delta and polymerase epsilon for processive synthesis on the lagging and leading strand, respectively. This Mus musculus (Mouse) protein is DNA polymerase alpha subunit B (Pola2).